We begin with the raw amino-acid sequence, 407 residues long: 45 kDa calcium-binding protein (407 aa).

The signal sequence occupies residues 1-35 (MVWSWVAMASRWGPLVGLAPRCLWLLGAVLLMDAS). Asn40 is a glycosylation site (N-linked (GlcNAc...) asparagine). EF-hand domains are found at residues 98 to 133 (RSRR…KTAE) and 137 to 172 (EAME…SKGH). Ser99 carries the phosphoserine modification. Residues Asp111, Asn113, Asp115, Lys117, Glu122, Asp150, Asp152, Asp154, His156, and Glu161 each coordinate Ca(2+). Phosphothreonine is present on residues Thr193 and Thr217. Over residues 249-259 (GSSLAGAPGPG) the composition is skewed to low complexity. Residues 249–282 (GSSLAGAPGPGDQRQGPGIAGKSGKVLREPQPGC) form a disordered region. Residues Asp291, Asp293, Asp295, Gln297, and Glu302 each coordinate Ca(2+). EF-hand domains follow at residues 291–313 (DQDG…TVEN), 323–358 (WVKD…MNEY), and 359–394 (NALN…FTGS). At Thr310 the chain carries Phosphothreonine. Asp336, Asn338, and Asp340 together coordinate Ca(2+). Residue Thr344 is modified to Phosphothreonine. The Ca(2+) site is built by Glu347, Asp372, Asn374, Asn376, His378, and Glu383. The tract at residues 354–407 (PMNEYNALNEAKQMIAVADENQNHHLEPEEVLKYSEFFTGSKLVDYARSVHEEF) is necessary for intracellular retention in Golgi apparatus lumen.

The protein belongs to the CREC family.

Its subcellular location is the golgi apparatus lumen. Its function is as follows. May regulate calcium-dependent activities in the endoplasmic reticulum lumen or post-ER compartment. The protein is 45 kDa calcium-binding protein (SDF4) of Macaca fascicularis (Crab-eating macaque).